Reading from the N-terminus, the 215-residue chain is Holliday junction branch migration complex subunit RuvA (215 aa).

A domain I region spans residues 1–67 (MIGWLQGERI…DDGSTLFGFC (67 aa)). The domain II stretch occupies residues 68–146 (DQQERDLFRT…NWAPLQEPSL (79 aa)). The interval 147–158 (SLVDRSDVKAIP) is flexible linker. The tract at residues 159–215 (LGEPCLRDLQITLETLGYEDLEIRRAMRAVASGPDVPAEDDGDAWLRASLKWLSQSA) is domain III.

The protein belongs to the RuvA family. As to quaternary structure, homotetramer. Forms an RuvA(8)-RuvB(12)-Holliday junction (HJ) complex. HJ DNA is sandwiched between 2 RuvA tetramers; dsDNA enters through RuvA and exits via RuvB. An RuvB hexamer assembles on each DNA strand where it exits the tetramer. Each RuvB hexamer is contacted by two RuvA subunits (via domain III) on 2 adjacent RuvB subunits; this complex drives branch migration. In the full resolvosome a probable DNA-RuvA(4)-RuvB(12)-RuvC(2) complex forms which resolves the HJ.

Its subcellular location is the cytoplasm. Functionally, the RuvA-RuvB-RuvC complex processes Holliday junction (HJ) DNA during genetic recombination and DNA repair, while the RuvA-RuvB complex plays an important role in the rescue of blocked DNA replication forks via replication fork reversal (RFR). RuvA specifically binds to HJ cruciform DNA, conferring on it an open structure. The RuvB hexamer acts as an ATP-dependent pump, pulling dsDNA into and through the RuvAB complex. HJ branch migration allows RuvC to scan DNA until it finds its consensus sequence, where it cleaves and resolves the cruciform DNA. In Synechococcus sp. (strain WH7803), this protein is Holliday junction branch migration complex subunit RuvA.